Here is a 509-residue protein sequence, read N- to C-terminus: GMP synthase [glutamine-hydrolyzing] (509 aa).

One can recognise a Glutamine amidotransferase type-1 domain in the interval 4–194; the sequence is LVLVVDFGGQ…LYNICGLENS (191 aa). Cys-81 acts as the Nucleophile in catalysis. Active-site residues include His-168 and Glu-170. A GMPS ATP-PPase domain is found at 195–384; that stretch reads WSMASFAEEK…LGIPHHLVWR (190 aa). 222-228 serves as a coordination point for ATP; that stretch reads SGGVDSS.

Homodimer.

It catalyses the reaction XMP + L-glutamine + ATP + H2O = GMP + L-glutamate + AMP + diphosphate + 2 H(+). Its pathway is purine metabolism; GMP biosynthesis; GMP from XMP (L-Gln route): step 1/1. Functionally, catalyzes the synthesis of GMP from XMP. The polypeptide is GMP synthase [glutamine-hydrolyzing] (Clostridium perfringens (strain 13 / Type A)).